We begin with the raw amino-acid sequence, 103 residues long: Integration host factor subunit beta (103 aa).

This sequence belongs to the bacterial histone-like protein family. Heterodimer of an alpha and a beta chain.

In terms of biological role, this protein is one of the two subunits of integration host factor, a specific DNA-binding protein that functions in genetic recombination as well as in transcriptional and translational control. This is Integration host factor subunit beta from Sinorhizobium medicae (strain WSM419) (Ensifer medicae).